The chain runs to 277 residues: NH(3)-dependent NAD(+) synthetase (277 aa).

Residue 36 to 43 coordinates ATP; that stretch reads GLSGGIDS. Asp42 lines the Mg(2+) pocket. Position 118 (Arg118) interacts with deamido-NAD(+). Thr138 lines the ATP pocket. Glu143 serves as a coordination point for Mg(2+). Residues Lys167 and Ser189 each coordinate ATP.

This sequence belongs to the NAD synthetase family. In terms of assembly, homodimer.

It catalyses the reaction deamido-NAD(+) + NH4(+) + ATP = AMP + diphosphate + NAD(+) + H(+). Its pathway is cofactor biosynthesis; NAD(+) biosynthesis; NAD(+) from deamido-NAD(+) (ammonia route): step 1/1. Functionally, catalyzes the ATP-dependent amidation of deamido-NAD to form NAD. Uses ammonia as a nitrogen source. In Chlorobium phaeobacteroides (strain DSM 266 / SMG 266 / 2430), this protein is NH(3)-dependent NAD(+) synthetase.